The sequence spans 153 residues: uncharacterized protein (153 aa).

Transmembrane regions (helical) follow at residues 17–37 (ITLI…SMFF), 44–64 (FLLC…IGMG), and 118–138 (FVFI…TLII).

To M.jannaschii MJ0129 and MJ0554.

It is found in the cell membrane. This is an uncharacterized protein from Methanocaldococcus jannaschii (strain ATCC 43067 / DSM 2661 / JAL-1 / JCM 10045 / NBRC 100440) (Methanococcus jannaschii).